The primary structure comprises 166 residues: PTS system glucose-specific EIIA component (166 aa).

One can recognise a PTS EIIA type-1 domain in the interval 36–140; that stretch reads DVVFSEKIVG…SVLTPIVISN (105 aa). Zn(2+)-binding residues include H73 and H88. The active-site Tele-phosphohistidine intermediate; for EIIA activity is the H88. H88 is modified (phosphohistidine; by HPr).

As to quaternary structure, heterodimer with glycerol kinase (glpk). Zn(2+) serves as cofactor.

It localises to the cytoplasm. In terms of biological role, the phosphoenolpyruvate-dependent sugar phosphotransferase system (sugar PTS), a major carbohydrate active transport system, catalyzes the phosphorylation of incoming sugar substrates concomitantly with their translocation across the cell membrane. The enzyme II complex composed of PtsG and Crr is involved in glucose transport. The sequence is that of PTS system glucose-specific EIIA component (crr) from Haemophilus influenzae (strain ATCC 51907 / DSM 11121 / KW20 / Rd).